A 291-amino-acid chain; its full sequence is Popeye domain-containing protein 3 (291 aa).

Residue Asn4 is glycosylated (N-linked (GlcNAc...) asparagine). The next 3 membrane-spanning stretches (helical) occupy residues 27–44 (GAIY…FMGG), 48–70 (FGLL…WAWV), and 77–99 (IFSW…AYQV).

Belongs to the popeye family. Expressed in cardiac and skeletal muscle.

It localises to the membrane. In terms of biological role, may play a role in the maintenance of heart function mediated, at least in part, through cAMP-binding. May play a role in the regulation of KCNK2-mediated current amplitude. The polypeptide is Popeye domain-containing protein 3 (Popdc3) (Mus musculus (Mouse)).